A 275-amino-acid chain; its full sequence is Diaminopimelate epimerase (275 aa).

Substrate-binding residues include N13, Q46, and N66. Residue C75 is the Proton donor of the active site. Substrate-binding positions include 76 to 77, N159, N192, and 210 to 211; these read GN and ER. C219 functions as the Proton acceptor in the catalytic mechanism. A substrate-binding site is contributed by 220–221; the sequence is GS.

The protein belongs to the diaminopimelate epimerase family. Homodimer.

It localises to the cytoplasm. It catalyses the reaction (2S,6S)-2,6-diaminopimelate = meso-2,6-diaminopimelate. It participates in amino-acid biosynthesis; L-lysine biosynthesis via DAP pathway; DL-2,6-diaminopimelate from LL-2,6-diaminopimelate: step 1/1. Catalyzes the stereoinversion of LL-2,6-diaminopimelate (L,L-DAP) to meso-diaminopimelate (meso-DAP), a precursor of L-lysine and an essential component of the bacterial peptidoglycan. The sequence is that of Diaminopimelate epimerase from Idiomarina loihiensis (strain ATCC BAA-735 / DSM 15497 / L2-TR).